The chain runs to 249 residues: Chromosome segregation and cytokinesis defective protein 1 (249 aa).

Positions 12-48 form a coiled coil; the sequence is VVAMADTLETRVKDLLEEYKKKLREVALQTAKAESDR. Disordered regions lie at residues 70-89, 94-183, and 208-249; these read PDDFYIESGEEEEEGEAAVA, LPSE…PEKP, and TTAT…GTSV. Residues 73-85 are compositionally biased toward acidic residues; that stretch reads FYIESGEEEEEGE. Positions 109-126 are enriched in polar residues; the sequence is QKTSIPIGQNSGRNTVQV. The span at 224 to 236 shows a compositional bias: low complexity; that stretch reads SGAASKKAAAAAG.

The protein belongs to the borealin family. Highly divergent. In terms of assembly, component of the CPC complex which consists of icp-1; csc-1; bir-1 and air-2. Within the complex interacts with Aurora B/air-2, bir-1 and icp-1.

It is found in the nucleus. It localises to the chromosome. The protein resides in the centromere. The protein localises to the cytoplasm. Its subcellular location is the cytoskeleton. It is found in the spindle. In terms of biological role, component of the chromosomal passenger complex (CPC), a complex that acts as a key regulator of chromosome segregation and cytokinesis during mitosis. The CPC complex has essential functions at the centromere in ensuring correct chromosome alignment and segregation. In the complex, it may be required to direct the Aurora B/air-2 to centromeric DNA. This chain is Chromosome segregation and cytokinesis defective protein 1 (csc-1), found in Caenorhabditis elegans.